The primary structure comprises 889 residues: Alanine--tRNA ligase (889 aa).

The Zn(2+) site is built by His587, His591, Cys691, and His695. Disordered stretches follow at residues 734-760 (QQEQ…EENK) and 866-889 (AQGG…MILG). Positions 872–881 (DTSKKDEAIS) are enriched in basic and acidic residues.

It belongs to the class-II aminoacyl-tRNA synthetase family. Zn(2+) is required as a cofactor.

It is found in the cytoplasm. The catalysed reaction is tRNA(Ala) + L-alanine + ATP = L-alanyl-tRNA(Ala) + AMP + diphosphate. Its function is as follows. Catalyzes the attachment of alanine to tRNA(Ala) in a two-step reaction: alanine is first activated by ATP to form Ala-AMP and then transferred to the acceptor end of tRNA(Ala). Also edits incorrectly charged Ser-tRNA(Ala) and Gly-tRNA(Ala) via its editing domain. The polypeptide is Alanine--tRNA ligase (Nitrosopumilus maritimus (strain SCM1)).